We begin with the raw amino-acid sequence, 180 residues long: Methionine-R-sulfoxide reductase B2, mitochondrial (180 aa).

A mitochondrion-targeting transit peptide spans 1–41; sequence MSRFLVRLSTVVSKGATGKSVLPQKRIFAGIRLISSSTGLQ. In terms of domain architecture, MsrB spans 49–178; it reads STDWQRKLSP…NSVALNFKPR (130 aa). Positions 88, 91, 144, and 147 each coordinate Zn(2+). Cys-167 serves as the catalytic Nucleophile.

This sequence belongs to the MsrB Met sulfoxide reductase family. Requires Zn(2+) as cofactor.

Its subcellular location is the mitochondrion. The catalysed reaction is L-methionyl-[protein] + [thioredoxin]-disulfide + H2O = L-methionyl-(R)-S-oxide-[protein] + [thioredoxin]-dithiol. The enzyme catalyses [thioredoxin]-disulfide + L-methionine + H2O = L-methionine (R)-S-oxide + [thioredoxin]-dithiol. Its function is as follows. Methionine-sulfoxide reductase that specifically reduces methionine (R)-sulfoxide back to methionine. While in many cases, methionine oxidation is the result of random oxidation following oxidative stress, methionine oxidation is also a post-translational modification that takes place on specific residue. Upon oxidative stress, may play a role in the preservation of mitochondrial integrity by decreasing the intracellular reactive oxygen species build-up through its scavenging role, hence contributing to cell survival and protein maintenance. The protein is Methionine-R-sulfoxide reductase B2, mitochondrial (msrb2) of Danio rerio (Zebrafish).